The following is a 1259-amino-acid chain: Autism susceptibility gene 2 protein (1259 aa).

Disordered regions lie at residues 1–87 (MDGP…EEDI), 108–285 (LKPQ…QDCC), 299–470 (CPQV…PPPP), 771–1027 (PNSM…MTVG), and 1119–1146 (REPH…HERG). Positions 8–17 (HGLRKKRRSR) are enriched in basic residues. Over residues 28–41 (GGLGAGAAGGGGAG) the composition is skewed to gly residues. Residues 108–118 (LKPQERVEKRQ) are compositionally biased toward basic and acidic residues. A compositionally biased stretch (basic residues) spans 136–147 (HSKKSRLSHPHH). Basic and acidic residues predominate over residues 148–158 (YSSDRENDRNL). Residues 177–192 (PGQNSCRDSDSESASG) are compositionally biased toward polar residues. Residues 276-285 (RSQEKSQDCC) show a composition bias toward basic and acidic residues. The segment at 289–472 (IFEPVVLKDP…PTALPPPPPL (184 aa)) is important for regulation of lamellipodia formation. Pro residues-rich tracts occupy residues 331–345 (PPQP…PQGP) and 353–365 (APQP…PRPQ). Residues 386 to 410 (SLSQPLSAYNSSSLSLNSLSSSRSS) show a composition bias toward low complexity. Positions 436-447 (PNHSPLHSFTPT) are enriched in polar residues. The span at 801–810 (PSFPTPPPWL) shows a compositional bias: pro residues. Composition is skewed to basic and acidic residues over residues 813 to 850 (GELE…VEKR), 876 to 935 (IRAH…EAKQ), and 960 to 993 (REAE…HDLP). Over residues 1125–1134 (SHHHHHHHHP) the composition is skewed to basic residues. A phosphoserine mark is found at Ser-1198 and Ser-1233. The interval 1217–1259 (LSAPPPLISTLGGRPVSPRRTTPLSAEIRERPPSHTLKDIEAR) is disordered. Over residues 1243 to 1259 (EIRERPPSHTLKDIEAR) the composition is skewed to basic and acidic residues.

This sequence belongs to the AUTS2 family. In terms of assembly, component of a PRC1-like complex that contains PCGF5, RNF2, CSNK2B, RYBP and AUTS2. Within this complex, interacts directly with PCGF5 and CSNK2B. Interacts with the histone acetyltransferase EP300/p300. Interacts (via Pro-rich region) with PREX1, DOCK1 and ELMO2. In terms of tissue distribution, strongly expressed in brain, skeletal muscle and kidney. Also expressed in placenta, lung and leukocytes.

The protein resides in the nucleus. Its subcellular location is the cytoplasm. It is found in the cytoskeleton. It localises to the cell projection. The protein localises to the growth cone. Its function is as follows. Component of a Polycomb group (PcG) multiprotein PRC1-like complex, a complex class required to maintain the transcriptionally repressive state of many genes, including Hox genes, throughout development. PcG PRC1 complex acts via chromatin remodeling and modification of histones; it mediates monoubiquitination of histone H2A 'Lys-119', rendering chromatin heritably changed in its expressibility. The PRC1-like complex that contains PCGF5, RNF2, CSNK2B, RYBP and AUTS2 has decreased histone H2A ubiquitination activity, due to the phosphorylation of RNF2 by CSNK2B. As a consequence, the complex mediates transcriptional activation. In the cytoplasm, plays a role in axon and dendrite elongation and in neuronal migration during embryonic brain development. Promotes reorganization of the actin cytoskeleton, lamellipodia formation and neurite elongation via its interaction with RAC guanine nucleotide exchange factors, which then leads to the activation of RAC1. This is Autism susceptibility gene 2 protein (AUTS2) from Homo sapiens (Human).